We begin with the raw amino-acid sequence, 184 residues long: uncharacterized protein (184 aa).

It belongs to the TorD/DmsD family.

This is an uncharacterized protein from Haemophilus influenzae (strain ATCC 51907 / DSM 11121 / KW20 / Rd).